Here is a 400-residue protein sequence, read N- to C-terminus: NAD-dependent protein deacetylase sirtuin-7 (400 aa).

The interval 1–27 (MAAGGLSRSERKAAERVRRLREEQQRE) is disordered. A compositionally biased stretch (basic and acidic residues) spans 8–27 (RSERKAAERVRRLREEQQRE). The Deacetylase sirtuin-type domain maps to 82-329 (PEELRGKVRE…RLLMAELGLE (248 aa)). Residues 107–126 (GAGI…NGVW) and 167–170 (QNCD) contribute to the NAD(+) site. His187 acts as the Proton acceptor in catalysis. Residues Cys195, Cys198, Cys225, and Cys228 each coordinate Zn(2+). NAD(+)-binding positions include 268–270 (GSS), 297–299 (NLQ), and Cys315. The disordered stretch occupies residues 354 to 380 (SHSRKSLCRSREEAPPGDRGAPLSSAP). Position 388 is an asymmetric dimethylarginine; alternate (Arg388). Arg388 carries the post-translational modification Omega-N-methylarginine; alternate.

Belongs to the sirtuin family. Class IV subfamily. Interacts with UBTF and the RNA polymerase I complex. Interacts with components of the B-WICH complex, such as MYBBP1A, SMARCA5/SNF2H and BAZ1B/WSTF. Interacts with ELK4, leading to stabilization at target promoters for H3K18Ac deacetylation. Interacts with histone H2A and/or histone H2B. Interacts with DNMT1. Interacts with SIRT1. Zn(2+) is required as a cofactor. Post-translationally, phosphorylated during mitosis. In terms of processing, methylation at Arg-388 by PRMT6 inhibits the H3K18Ac histone deacetylase activity, promoting mitochondria biogenesis and maintaining mitochondria respiration. Ubiquitinated via 'Lys-63'-linked ubiquitin chains. Deubiquitinated by USP7, inhibiting the H3K18Ac histone deacetylase activity and regulating gluconeogenesis. Ubiquitinated by E3 ubiquitin-protein ligase complex containing FBXO7; leading to proteasomal degradation.

It is found in the nucleus. It localises to the nucleolus. Its subcellular location is the nucleoplasm. The protein localises to the chromosome. The protein resides in the cytoplasm. It catalyses the reaction N(6)-acetyl-L-lysyl-[protein] + NAD(+) + H2O = 2''-O-acetyl-ADP-D-ribose + nicotinamide + L-lysyl-[protein]. The catalysed reaction is N(6)-glutaryl-L-lysyl-[protein] + NAD(+) + H2O = 2''-O-glutaryl-ADP-D-ribose + nicotinamide + L-lysyl-[protein]. It carries out the reaction N(6)-succinyl-L-lysyl-[protein] + NAD(+) + H2O = 2''-O-succinyl-ADP-D-ribose + nicotinamide + L-lysyl-[protein]. The enzyme catalyses N(6)-propanoyl-L-lysyl-[protein] + NAD(+) + H2O = 3''-O-propanoyl-ADP-D-ribose + nicotinamide + L-lysyl-[protein]. It catalyses the reaction N(6)-decanoyl-L-lysyl-[protein] + NAD(+) + H2O = 2''-O-decanoyl-ADP-D-ribose + nicotinamide + L-lysyl-[protein]. With respect to regulation, NAD-dependent protein-lysine deacetylase and deacylase activities are activated by nucleic acids. Histone deacetylase activity is activated by DNA and nucleosomes. Protein-lysine deacylase activity is activated by RNA. H3K18Ac histone deacetylase activity is inhibited by methylation at Arg-388. H3K18Ac histone deacetylase activity is inhibited by deubiquitination by USP7. NAD-dependent protein-lysine deacylase that can act both as a deacetylase or deacylase (desuccinylase, depropionylase, deglutarylase and dedecanoylase), depending on the context. Specifically mediates deacetylation of histone H3 at 'Lys-18' (H3K18Ac). In contrast to other histone deacetylases, displays strong preference for a specific histone mark, H3K18Ac, directly linked to control of gene expression. H3K18Ac is mainly present around the transcription start site of genes and has been linked to activation of nuclear hormone receptors; SIRT7 thereby acts as a transcription repressor. Moreover, H3K18 hypoacetylation has been reported as a marker of malignancy in various cancers and seems to maintain the transformed phenotype of cancer cells. Also able to mediate deacetylation of histone H3 at 'Lys-36' (H3K36Ac) in the context of nucleosomes. Also mediates deacetylation of non-histone proteins, such as ATM, CDK9, DDX21, DDB1, FBL, FKBP5/FKBP51, GABPB1, RAN, RRP9/U3-55K and POLR1E/PAF53. Enriched in nucleolus where it stimulates transcription activity of the RNA polymerase I complex. Acts by mediating the deacetylation of the RNA polymerase I subunit POLR1E/PAF53, thereby promoting the association of RNA polymerase I with the rDNA promoter region and coding region. In response to metabolic stress, SIRT7 is released from nucleoli leading to hyperacetylation of POLR1E/PAF53 and decreased RNA polymerase I transcription. Required to restore the transcription of ribosomal RNA (rRNA) at the exit from mitosis. Promotes pre-ribosomal RNA (pre-rRNA) cleavage at the 5'-terminal processing site by mediating deacetylation of RRP9/U3-55K, a core subunit of the U3 snoRNP complex. Mediates 'Lys-37' deacetylation of Ran, thereby regulating the nuclear export of NF-kappa-B subunit RELA/p65. Acts as a regulator of DNA damage repair by mediating deacetylation of ATM during the late stages of DNA damage response, promoting ATM dephosphorylation and deactivation. Suppresses the activity of the DCX (DDB1-CUL4-X-box) E3 ubiquitin-protein ligase complexes by mediating deacetylation of DDB1, which prevents the interaction between DDB1 and CUL4 (CUL4A or CUL4B). Activates RNA polymerase II transcription by mediating deacetylation of CDK9, thereby promoting 'Ser-2' phosphorylation of the C-terminal domain (CTD) of RNA polymerase II. Deacetylates FBL, promoting histone-glutamine methyltransferase activity of FBL. Acts as a regulator of mitochondrial function by catalyzing deacetylation of GABPB1. Regulates Akt/AKT1 activity by mediating deacetylation of FKBP5/FKBP51. Required to prevent R-loop-associated DNA damage and transcription-associated genomic instability by mediating deacetylation and subsequent activation of DDX21, thereby overcoming R-loop-mediated stalling of RNA polymerases. In addition to protein deacetylase activity, also acts as a protein-lysine deacylase. Acts as a protein depropionylase by mediating depropionylation of Osterix (SP7), thereby regulating bone formation by osteoblasts. Acts as a histone deglutarylase by mediating deglutarylation of histone H4 on 'Lys-91' (H4K91glu); a mark that destabilizes nucleosomes by promoting dissociation of the H2A-H2B dimers from nucleosomes. Acts as a histone desuccinylase: in response to DNA damage, recruited to DNA double-strand breaks (DSBs) and catalyzes desuccinylation of histone H3 on 'Lys-122' (H3K122succ), thereby promoting chromatin condensation and DSB repair. Also promotes DSB repair by promoting H3K18Ac deacetylation, regulating non-homologous end joining (NHEJ). Along with its role in DNA repair, required for chromosome synapsis during prophase I of female meiosis by catalyzing H3K18Ac deacetylation. Involved in transcriptional repression of LINE-1 retrotransposon via H3K18Ac deacetylation, and promotes their association with the nuclear lamina. Required to stabilize ribosomal DNA (rDNA) heterochromatin and prevent cellular senescence induced by rDNA instability. Acts as a negative regulator of SIRT1 by preventing autodeacetylation of SIRT1, restricting SIRT1 deacetylase activity. The sequence is that of NAD-dependent protein deacetylase sirtuin-7 from Homo sapiens (Human).